Here is a 513-residue protein sequence, read N- to C-terminus: ATP synthase subunit alpha (513 aa).

ATP is bound at residue 169–176; the sequence is GDRKTGKS.

It belongs to the ATPase alpha/beta chains family. F-type ATPases have 2 components, CF(1) - the catalytic core - and CF(0) - the membrane proton channel. CF(1) has five subunits: alpha(3), beta(3), gamma(1), delta(1), epsilon(1). CF(0) has three main subunits: a(1), b(2) and c(9-12). The alpha and beta chains form an alternating ring which encloses part of the gamma chain. CF(1) is attached to CF(0) by a central stalk formed by the gamma and epsilon chains, while a peripheral stalk is formed by the delta and b chains.

Its subcellular location is the cell membrane. The catalysed reaction is ATP + H2O + 4 H(+)(in) = ADP + phosphate + 5 H(+)(out). In terms of biological role, produces ATP from ADP in the presence of a proton gradient across the membrane. The alpha chain is a regulatory subunit. In Levilactobacillus brevis (strain ATCC 367 / BCRC 12310 / CIP 105137 / JCM 1170 / LMG 11437 / NCIMB 947 / NCTC 947) (Lactobacillus brevis), this protein is ATP synthase subunit alpha.